The sequence spans 310 residues: Methionyl-tRNA formyltransferase (310 aa).

Residue 111–114 (SLLP) coordinates (6S)-5,6,7,8-tetrahydrofolate.

It belongs to the Fmt family.

It carries out the reaction L-methionyl-tRNA(fMet) + (6R)-10-formyltetrahydrofolate = N-formyl-L-methionyl-tRNA(fMet) + (6S)-5,6,7,8-tetrahydrofolate + H(+). In terms of biological role, attaches a formyl group to the free amino group of methionyl-tRNA(fMet). The formyl group appears to play a dual role in the initiator identity of N-formylmethionyl-tRNA by promoting its recognition by IF2 and preventing the misappropriation of this tRNA by the elongation apparatus. This chain is Methionyl-tRNA formyltransferase, found in Rhodopseudomonas palustris (strain TIE-1).